A 538-amino-acid polypeptide reads, in one-letter code: Carotenoid 9,10(9',10')-cleavage dioxygenase 1 (538 aa).

The Fe cation site is built by H222, H270, H336, and H523.

It belongs to the carotenoid oxygenase family. Homodimer. Fe(2+) is required as a cofactor. High expression in flowers and siliques. Also detected in stems, leaves and roots.

It localises to the cytoplasm. The catalysed reaction is all-trans-zeaxanthin + 2 O2 = 4,9-dimethyldodeca-2,4,6,8,10-pentaenedial + 2 (3R)-hydroxy-beta-ionone. Cleaves a variety of carotenoids symmetrically at both the 9-10 and 9'-10' double bonds. Active on beta,beta-carotene, lutein, zeaxanthin, all-trans-violaxanthin, 9-cis-violaxanthin and 9'-cis-neoxanthin. With most substrates, the carotenoid is symmetrically cleaved. Probably not involved in abscisic acid biosynthesis. This chain is Carotenoid 9,10(9',10')-cleavage dioxygenase 1 (CCD1), found in Arabidopsis thaliana (Mouse-ear cress).